A 386-amino-acid chain; its full sequence is Putative 8-amino-7-oxononanoate synthase 2 (386 aa).

Substrate is bound at residue arginine 21. Glycine 104–tyrosine 105 serves as a coordination point for pyridoxal 5'-phosphate. Histidine 129 is a substrate binding site. Pyridoxal 5'-phosphate is bound by residues serine 176, aspartate 201 to histidine 204, and threonine 230 to lysine 233. Lysine 233 is modified (N6-(pyridoxal phosphate)lysine).

This sequence belongs to the class-II pyridoxal-phosphate-dependent aminotransferase family. BioF subfamily. In terms of assembly, homodimer. The cofactor is pyridoxal 5'-phosphate.

The catalysed reaction is 6-carboxyhexanoyl-[ACP] + L-alanine + H(+) = (8S)-8-amino-7-oxononanoate + holo-[ACP] + CO2. It functions in the pathway cofactor biosynthesis; biotin biosynthesis. Functionally, catalyzes the decarboxylative condensation of pimeloyl-[acyl-carrier protein] and L-alanine to produce 8-amino-7-oxononanoate (AON), [acyl-carrier protein], and carbon dioxide. This chain is Putative 8-amino-7-oxononanoate synthase 2 (bioF), found in Bacillus velezensis (strain DSM 23117 / BGSC 10A6 / LMG 26770 / FZB42) (Bacillus amyloliquefaciens subsp. plantarum).